We begin with the raw amino-acid sequence, 1906 residues long: A disintegrin and metalloproteinase with thrombospondin motifs 20 (1906 aa).

An N-terminal signal peptide occupies residues 1 to 26; sequence MRVAKWLTGLLCPISLLLTGSWEVRF. Positions 27-249 are excised as a propeptide; it reads HPRQEALVKT…RSQLHSRNKR (223 aa). N-linked (GlcNAc...) asparagine glycosylation is found at N92 and N221. The disordered stretch occupies residues 201–222; that stretch reads PCEVSENQMEKTALPSQSSRNT. The region spanning 255–464 is the Peptidase M12B domain; the sequence is RYVEVMVTAD…GHGECLLDKP (210 aa). 11 cysteine pairs are disulfide-bonded: C330–C383, C359–C365, C377–C459, C415–C443, C486–C508, C497–C518, C503–C537, C531–C542, C565–C602, C569–C607, and C580–C592. Residue H399 coordinates Zn(2+). The active site involves E400. Zn(2+)-binding residues include H403 and H409. Residues 465–552 form the Disintegrin domain; sequence NGRTYDLSPQ…VTRDMETRPV (88 aa). The 56-residue stretch at 553–608 folds into the TSP type-1 1 domain; it reads DGEWGPWGPYSSCSRTCGGGIKSTARLCDRPEPRNGGRYCVGRRMKFRSCNTDSCP. N-linked (GlcNAc...) asparagine glycosylation is found at N714, N798, and N805. A spacer region spans residues 721-842; it reads AGVFNSAHYG…FNIPIEERSN (122 aa). 7 consecutive TSP type-1 domains span residues 843–901, 906–962, 962–1015, 1017–1074, 1075–1131, 1148–1202, and 1203–1260; these read LFSW…MDCE, IIGK…GSCV, VLTR…NCNE, PCPS…RACA, SWHV…APCL, RAAQ…LCFS, and PCGE…AACP. An N-linked (GlcNAc...) asparagine glycan is attached at N1057. The interval 1265-1295 is disordered; sequence RAPSSSEQPSHVPSRNVPLTHKPGENQDQGA. Polar residues predominate over residues 1266-1277; it reads APSSSEQPSHVP. 7 consecutive TSP type-1 domains span residues 1300 to 1351, 1354 to 1411, 1412 to 1465, 1468 to 1526, 1527 to 1584, 1585 to 1648, and 1650 to 1706; these read RGNQ…RHCG, PCPH…HACP, EDVS…KACR, RCPS…QDCM, RYQW…PHCK, YSVV…LRSC, and HVAT…NDCK. N1562 is a glycosylation site (N-linked (GlcNAc...) asparagine). Positions 1707-1906 constitute a GON domain; the sequence is LLTTCKELQV…MATGLSIQVL (200 aa). 3 N-linked (GlcNAc...) asparagine glycosylation sites follow: N1719, N1759, and N1777.

It depends on Zn(2+) as a cofactor. In terms of processing, the precursor is cleaved by a furin endopeptidase. Glycosylated. Can be O-fucosylated by POFUT2 on a serine or a threonine residue found within the consensus sequence C1-X(2)-(S/T)-C2-G of the TSP type-1 repeat domains where C1 and C2 are the first and second cysteine residue of the repeat, respectively. Fucosylated repeats can then be further glycosylated by the addition of a beta-1,3-glucose residue by the glucosyltransferase, B3GALTL. Fucosylation mediates the efficient secretion of ADAMTS family members. Can also be C-glycosylated with one or two mannose molecules on tryptophan residues within the consensus sequence W-X-X-W of the TPRs, and N-glycosylated. These other glycosylations can also facilitate secretion. As to expression, expressed at low level in testis and brain.

Its subcellular location is the secreted. It localises to the extracellular space. The protein localises to the extracellular matrix. Functionally, may play a role in tissue-remodeling process occurring in both normal and pathological conditions. May have a protease-independent function in the transport from the endoplasmic reticulum to the Golgi apparatus of secretory cargos, mediated by the GON domain. The chain is A disintegrin and metalloproteinase with thrombospondin motifs 20 (Adamts20) from Mus musculus (Mouse).